The following is a 926-amino-acid chain: Probable Xaa-Pro aminopeptidase PTT_10145 (926 aa).

Mn(2+) is bound by residues aspartate 274, aspartate 285, glutamate 435, and glutamate 476. 5 disordered regions span residues 505-538 (GNPGTTEILNPSPTPPRRMRSENRTPRLRAPGIS), 595-615 (KRDSVPTAPSRPTKAKNLSPV), 668-696 (SSSTQTSPKPMTVPTFESRQKSHTVEEKH), 711-741 (IGQSNRAIGPEERRRKAQSDHHHHSRLKAAT), and 865-926 (MPVL…FLTR). Polar residues predominate over residues 506–515 (NPGTTEILNP). 2 stretches are compositionally biased toward basic and acidic residues: residues 685 to 696 (SRQKSHTVEEKH) and 719 to 730 (GPEERRRKAQSD). Polar residues predominate over residues 887 to 897 (NNATNKRSMID). Positions 900-915 (PAERRTRPERPERPAR) are enriched in basic and acidic residues.

The protein belongs to the peptidase M24B family. Mn(2+) is required as a cofactor.

It catalyses the reaction Release of any N-terminal amino acid, including proline, that is linked to proline, even from a dipeptide or tripeptide.. In terms of biological role, catalyzes the removal of a penultimate prolyl residue from the N-termini of peptides. The sequence is that of Probable Xaa-Pro aminopeptidase PTT_10145 from Pyrenophora teres f. teres (strain 0-1) (Barley net blotch fungus).